Here is a 341-residue protein sequence, read N- to C-terminus: MTKDILILAVETSCDETSVSFIKNGRDILSNTVLSQIESHKRFGGVVPEVASRHHVEGITTTINEALVDADVSIEDIDAIAVTEGPGLIGALLIGVNAAKALAFAYDKPLIPVHHIAGHIYANHIEEPLTFPLIALIVSGGHTELVYMKDHLSFEVIGETRDDAVGEAYDKVARTIGLNYPGGPQVDRLAAEGEDTYSFPRVWLDKDSYDFSFSGLKSAVINQLHNQRQKNIPIIEANVATSFQNSVVEVLTFKAIQACKEYGVQRLIVAGGVASNKGLRQSLADQCKVNDIQLTIPSPKLCTDNAAMIGVAGHYLYQQGRFADLALNGHSNIDLEEYSAE.

The Fe cation site is built by H115 and H119. Residues 137-141 (IVSGG), D170, G183, D187, and N276 each bind substrate. Residue D304 participates in Fe cation binding.

The protein belongs to the KAE1 / TsaD family. Fe(2+) serves as cofactor.

It is found in the cytoplasm. It catalyses the reaction L-threonylcarbamoyladenylate + adenosine(37) in tRNA = N(6)-L-threonylcarbamoyladenosine(37) in tRNA + AMP + H(+). In terms of biological role, required for the formation of a threonylcarbamoyl group on adenosine at position 37 (t(6)A37) in tRNAs that read codons beginning with adenine. Is involved in the transfer of the threonylcarbamoyl moiety of threonylcarbamoyl-AMP (TC-AMP) to the N6 group of A37, together with TsaE and TsaB. TsaD likely plays a direct catalytic role in this reaction. In Staphylococcus aureus (strain MSSA476), this protein is tRNA N6-adenosine threonylcarbamoyltransferase.